The sequence spans 44 residues: pyr operon leader peptide (44 aa).

The chain is pyr operon leader peptide (pyrL) from Escherichia coli O157:H7.